We begin with the raw amino-acid sequence, 630 residues long: 1-deoxy-D-xylulose-5-phosphate synthase (630 aa).

Thiamine diphosphate contacts are provided by residues His72 and 113-115 (GHS). Asp144 lines the Mg(2+) pocket. Thiamine diphosphate-binding positions include 145–146 (GA), Asn173, Tyr284, and Glu367. Residue Asn173 participates in Mg(2+) binding.

Belongs to the transketolase family. DXPS subfamily. As to quaternary structure, homodimer. Mg(2+) serves as cofactor. It depends on thiamine diphosphate as a cofactor.

It carries out the reaction D-glyceraldehyde 3-phosphate + pyruvate + H(+) = 1-deoxy-D-xylulose 5-phosphate + CO2. The protein operates within metabolic intermediate biosynthesis; 1-deoxy-D-xylulose 5-phosphate biosynthesis; 1-deoxy-D-xylulose 5-phosphate from D-glyceraldehyde 3-phosphate and pyruvate: step 1/1. Functionally, catalyzes the acyloin condensation reaction between C atoms 2 and 3 of pyruvate and glyceraldehyde 3-phosphate to yield 1-deoxy-D-xylulose-5-phosphate (DXP). In Bacillus mycoides (strain KBAB4) (Bacillus weihenstephanensis), this protein is 1-deoxy-D-xylulose-5-phosphate synthase.